Reading from the N-terminus, the 430-residue chain is DD-carboxypeptidase/endopeptidase Mpg (430 aa).

Zn(2+) contacts are provided by His-295, Asp-299, and His-375.

It belongs to the peptidase M23B family. As to quaternary structure, monomer. Requires Zn(2+) as cofactor. In terms of processing, likely to be synthesized as a proenzyme. The cleavage of the N-terminal domain is probably required for the activation of the enzyme.

The protein resides in the cell outer membrane. With respect to regulation, peptidoglycan (PG) degradation activity is completely inhibited by zinc chelating EDTA and phenanthroline. Its function is as follows. Has both endopeptidase and DD-carboxypeptidase activities. Degrades cell wall peptidoglycan (PG) to allow consummate expression of pili. Degrades N.gonorrhoeae and E.coli PG side chains in vitro. Required for proper piliation, which in turn is required for normal colony morphology, resistance to H(2)O(2) damage and defense against killing by human polymorphonuclear leukocytes (PMNs). Involved in type IV pilus biogenesis. Involved in resistance against non-oxidative killing by adherent CXCL8/IL8-primed human PMNs. Protects from killing by PMN-produced antimicrobial factors, which kill by a mechanism completely independent of reactive oxygen species (ROS) production of the PMNs. Provides protection against oxidative damage caused by peroxides H(2)O(2) and cumene hydroperoxide in vitro. This Neisseria gonorrhoeae (strain ATCC 700825 / FA 1090) protein is DD-carboxypeptidase/endopeptidase Mpg.